The following is a 296-amino-acid chain: Probable lipid kinase YegS-like (296 aa).

The DAGKc domain occupies 1–130 (MPHTLLILNG…IDLAQVNDKH (130 aa)). ATP is bound by residues Thr-37, 63-69 (GDGTINE), and Thr-92. Residues Leu-212, Asp-215, and Leu-217 each contribute to the Mg(2+) site. The active-site Proton acceptor is Glu-268.

Belongs to the diacylglycerol/lipid kinase family. YegS lipid kinase subfamily. Mg(2+) is required as a cofactor. Ca(2+) serves as cofactor.

The protein localises to the cytoplasm. Probably phosphorylates lipids; the in vivo substrate is unknown. The sequence is that of Probable lipid kinase YegS-like from Yersinia enterocolitica serotype O:8 / biotype 1B (strain NCTC 13174 / 8081).